A 417-amino-acid chain; its full sequence is Serine hydroxymethyltransferase (417 aa).

(6S)-5,6,7,8-tetrahydrofolate is bound by residues L121 and 125–127 (GHL). At K229 the chain carries N6-(pyridoxal phosphate)lysine. 355-357 (SPF) lines the (6S)-5,6,7,8-tetrahydrofolate pocket.

This sequence belongs to the SHMT family. As to quaternary structure, homodimer. Pyridoxal 5'-phosphate serves as cofactor.

Its subcellular location is the cytoplasm. It catalyses the reaction (6R)-5,10-methylene-5,6,7,8-tetrahydrofolate + glycine + H2O = (6S)-5,6,7,8-tetrahydrofolate + L-serine. It participates in one-carbon metabolism; tetrahydrofolate interconversion. Its pathway is amino-acid biosynthesis; glycine biosynthesis; glycine from L-serine: step 1/1. Functionally, catalyzes the reversible interconversion of serine and glycine with tetrahydrofolate (THF) serving as the one-carbon carrier. This reaction serves as the major source of one-carbon groups required for the biosynthesis of purines, thymidylate, methionine, and other important biomolecules. Also exhibits THF-independent aldolase activity toward beta-hydroxyamino acids, producing glycine and aldehydes, via a retro-aldol mechanism. This chain is Serine hydroxymethyltransferase, found in Aeromonas salmonicida (strain A449).